Consider the following 122-residue polypeptide: Large ribosomal subunit protein bL19 (122 aa).

The protein belongs to the bacterial ribosomal protein bL19 family.

In terms of biological role, this protein is located at the 30S-50S ribosomal subunit interface and may play a role in the structure and function of the aminoacyl-tRNA binding site. The polypeptide is Large ribosomal subunit protein bL19 (rplS) (Synechocystis sp. (strain ATCC 27184 / PCC 6803 / Kazusa)).